The sequence spans 103 residues: Large ribosomal subunit protein bL21 (103 aa).

This sequence belongs to the bacterial ribosomal protein bL21 family. As to quaternary structure, part of the 50S ribosomal subunit. Contacts protein L20.

Functionally, this protein binds to 23S rRNA in the presence of protein L20. The sequence is that of Large ribosomal subunit protein bL21 from Dechloromonas aromatica (strain RCB).